The primary structure comprises 295 residues: Lipoyl synthase (295 aa).

Residues C34, C39, C45, C60, C64, C67, and S273 each coordinate [4Fe-4S] cluster. One can recognise a Radical SAM core domain in the interval 46–262 (WNKRHATIMI…KLMAYAKGFS (217 aa)).

It belongs to the radical SAM superfamily. Lipoyl synthase family. It depends on [4Fe-4S] cluster as a cofactor.

It is found in the cytoplasm. The catalysed reaction is [[Fe-S] cluster scaffold protein carrying a second [4Fe-4S](2+) cluster] + N(6)-octanoyl-L-lysyl-[protein] + 2 oxidized [2Fe-2S]-[ferredoxin] + 2 S-adenosyl-L-methionine + 4 H(+) = [[Fe-S] cluster scaffold protein] + N(6)-[(R)-dihydrolipoyl]-L-lysyl-[protein] + 4 Fe(3+) + 2 hydrogen sulfide + 2 5'-deoxyadenosine + 2 L-methionine + 2 reduced [2Fe-2S]-[ferredoxin]. Its pathway is protein modification; protein lipoylation via endogenous pathway; protein N(6)-(lipoyl)lysine from octanoyl-[acyl-carrier-protein]: step 2/2. Functionally, catalyzes the radical-mediated insertion of two sulfur atoms into the C-6 and C-8 positions of the octanoyl moiety bound to the lipoyl domains of lipoate-dependent enzymes, thereby converting the octanoylated domains into lipoylated derivatives. In Anaplasma marginale (strain St. Maries), this protein is Lipoyl synthase.